We begin with the raw amino-acid sequence, 429 residues long: Histidine--tRNA ligase (429 aa).

The protein belongs to the class-II aminoacyl-tRNA synthetase family. Homodimer.

It is found in the cytoplasm. The enzyme catalyses tRNA(His) + L-histidine + ATP = L-histidyl-tRNA(His) + AMP + diphosphate + H(+). The polypeptide is Histidine--tRNA ligase (Acidovorax ebreus (strain TPSY) (Diaphorobacter sp. (strain TPSY))).